The sequence spans 1094 residues: Carbamoyl phosphate synthase large chain (1094 aa).

Residues 1 to 402 (MPRRSDLHRI…AFQKALRALE (402 aa)) are carboxyphosphate synthetic domain. ATP-binding residues include Arg129, Arg169, Gly175, Gly176, Arg208, Leu210, Glu215, Gly241, Val242, His243, Gln285, and Glu299. In terms of domain architecture, ATP-grasp 1 spans 133–328 (GEAMEKIGLR…IARIGAKLAV (196 aa)). Residues Gln285, Glu299, and Asn301 each coordinate Mg(2+). Mn(2+) is bound by residues Gln285, Glu299, and Asn301. The interval 403 to 552 (TGRSGWTIAE…YLYGNYDEES (150 aa)) is oligomerization domain. The segment at 553 to 936 (EAATEGRKKV…AFMKSQLAAD (384 aa)) is carbamoyl phosphate synthetic domain. Residues 679–870 (EAIARELGIE…LPSVAARLML (192 aa)) form the ATP-grasp 2 domain. ATP-binding residues include Arg715, Arg754, Leu756, Glu761, Gly786, Ile787, His788, Ser789, Gln829, and Glu841. Residues Gln829, Glu841, and Asn843 each coordinate Mg(2+). Positions 829, 841, and 843 each coordinate Mn(2+). Residues 937 to 1077 (NALPREGTVF…QEWHEILRAP (141 aa)) enclose the MGS-like domain. Residues 937–1094 (NALPREGTVF…AGSTQPAGVA (158 aa)) form an allosteric domain region.

This sequence belongs to the CarB family. As to quaternary structure, composed of two chains; the small (or glutamine) chain promotes the hydrolysis of glutamine to ammonia, which is used by the large (or ammonia) chain to synthesize carbamoyl phosphate. Tetramer of heterodimers (alpha,beta)4. It depends on Mg(2+) as a cofactor. The cofactor is Mn(2+).

It carries out the reaction hydrogencarbonate + L-glutamine + 2 ATP + H2O = carbamoyl phosphate + L-glutamate + 2 ADP + phosphate + 2 H(+). It catalyses the reaction hydrogencarbonate + NH4(+) + 2 ATP = carbamoyl phosphate + 2 ADP + phosphate + 2 H(+). The protein operates within amino-acid biosynthesis; L-arginine biosynthesis; carbamoyl phosphate from bicarbonate: step 1/1. Its pathway is pyrimidine metabolism; UMP biosynthesis via de novo pathway; (S)-dihydroorotate from bicarbonate: step 1/3. In terms of biological role, large subunit of the glutamine-dependent carbamoyl phosphate synthetase (CPSase). CPSase catalyzes the formation of carbamoyl phosphate from the ammonia moiety of glutamine, carbonate, and phosphate donated by ATP, constituting the first step of 2 biosynthetic pathways, one leading to arginine and/or urea and the other to pyrimidine nucleotides. The large subunit (synthetase) binds the substrates ammonia (free or transferred from glutamine from the small subunit), hydrogencarbonate and ATP and carries out an ATP-coupled ligase reaction, activating hydrogencarbonate by forming carboxy phosphate which reacts with ammonia to form carbamoyl phosphate. The protein is Carbamoyl phosphate synthase large chain of Gemmatimonas aurantiaca (strain DSM 14586 / JCM 11422 / NBRC 100505 / T-27).